The chain runs to 202 residues: Matrix protein (202 aa).

Residues 35-38 carry the PPXY motif motif; it reads PPEY. The segment at 115–151 is essential for glycoprotein binding; it reads KIRRTLVFQWAESSGPLDGEELEYSQEITWDDDSEFV.

Belongs to the lyssavirus matrix protein family. As to quaternary structure, homomultimer. Interacts with nucleoprotein and with the cytoplasmic domain of glycoprotein.

It is found in the virion membrane. It localises to the host endomembrane system. Its function is as follows. Plays a major role in assembly and budding of virion. Completely covers the ribonucleoprotein coil and keep it in condensed bullet-shaped form. Inhibits viral transcription and stimulates replication. Plays a major role in early induction of TRAIL-mediated apoptosis in infected neurons. This chain is Matrix protein (M), found in Irkut virus (IRKV).